Consider the following 655-residue polypeptide: Interferon-induced GTP-binding protein Mx2 (655 aa).

Over residues 1–18 (MVLSTEENTGVDSVNLPS) the composition is skewed to polar residues. The disordered stretch occupies residues 1–28 (MVLSTEENTGVDSVNLPSGETGLGEKDQ). One can recognise a Dynamin-type G domain in the interval 60–333 (DLALPAIAVI…LISHICKSLP (274 aa)). Residues 70–77 (GDQSSGKS) form a G1 motif region. 70 to 77 (GDQSSGKS) lines the GTP pocket. Residues 95–97 (VTR) form a G2 motif region. The G3 motif stretch occupies residues 171-174 (DLPG). GTP contacts are provided by residues 171–175 (DLPGI) and 240–243 (TKPD). Residues 240–243 (TKPD) form a G4 motif region. Residues 272 to 275 (KCRG) form a G5 motif region. Residues 542 to 562 (EAEEEKKTKHGTSSSSQSQDL) are disordered. Residues 552-562 (GTSSSSQSQDL) are compositionally biased toward low complexity. Residues 567–655 (MAEIFQHLNA…ARRRLAKFPG (89 aa)) enclose the GED domain.

This sequence belongs to the TRAFAC class dynamin-like GTPase superfamily. Dynamin/Fzo/YdjA family.

The protein resides in the cytoplasm. Its function is as follows. Interferon-induced dynamin-like GTPase with antiviral activity against vesicular stomatitis virus (VSV) and Hantaan virus (HNTV). The chain is Interferon-induced GTP-binding protein Mx2 (Mx2) from Mus musculus (Mouse).